Reading from the N-terminus, the 243-residue chain is tRNA (guanine-N(1)-)-methyltransferase (243 aa).

S-adenosyl-L-methionine contacts are provided by residues Gly-123 and 143–148; that span reads LGDFVM.

It belongs to the RNA methyltransferase TrmD family. As to quaternary structure, homodimer.

The protein localises to the cytoplasm. It carries out the reaction guanosine(37) in tRNA + S-adenosyl-L-methionine = N(1)-methylguanosine(37) in tRNA + S-adenosyl-L-homocysteine + H(+). Its function is as follows. Specifically methylates guanosine-37 in various tRNAs. The chain is tRNA (guanine-N(1)-)-methyltransferase from Ruegeria pomeroyi (strain ATCC 700808 / DSM 15171 / DSS-3) (Silicibacter pomeroyi).